We begin with the raw amino-acid sequence, 1272 residues long: Ubiquitin carboxyl-terminal hydrolase 2 (1272 aa).

Positions threonine 736–glutamine 1258 constitute a USP domain. Cysteine 745 serves as the catalytic Nucleophile. A disordered region spans residues aspartate 884–proline 918. Residues asparagine 902–aspartate 911 show a composition bias toward acidic residues. At serine 907 the chain carries Phosphoserine. Catalysis depends on histidine 1209, which acts as the Proton acceptor.

Belongs to the peptidase C19 family. Forms a ternary complex with RSP5 and RUP1. Interacts with RSP5. Interacts with FZO1.

The catalysed reaction is Thiol-dependent hydrolysis of ester, thioester, amide, peptide and isopeptide bonds formed by the C-terminal Gly of ubiquitin (a 76-residue protein attached to proteins as an intracellular targeting signal).. In terms of biological role, has an ATP-independent isopeptidase activity, cleaving at the C-terminus of the ubiquitin moiety in natural or engineered linear fusion proteins, irrespective of their size or the presence of an N-terminal extension to ubiquitin. Hydrolyzes polyubiquitinated 'Lys-63' polyubiquitin chains in RPO21, producing mono-ubiquitinated RNA polymerase II. Removes ubiquitin chains that initiate proteolysis of FZO1 and inhibit mitochondrial fusion. In Saccharomyces cerevisiae (strain ATCC 204508 / S288c) (Baker's yeast), this protein is Ubiquitin carboxyl-terminal hydrolase 2 (UBP2).